Reading from the N-terminus, the 356-residue chain is UDP-N-acetylenolpyruvoylglucosamine reductase (356 aa).

In terms of domain architecture, FAD-binding PCMH-type spans 19 to 227; sequence LGGPAARFCS…RDAVLSLRRS (209 aa). R167 is a catalytic residue. S244 serves as the catalytic Proton donor. E348 is a catalytic residue.

It belongs to the MurB family. The cofactor is FAD.

The protein localises to the cytoplasm. The enzyme catalyses UDP-N-acetyl-alpha-D-muramate + NADP(+) = UDP-N-acetyl-3-O-(1-carboxyvinyl)-alpha-D-glucosamine + NADPH + H(+). Its pathway is cell wall biogenesis; peptidoglycan biosynthesis. Its function is as follows. Cell wall formation. This Thermobifida fusca (strain YX) protein is UDP-N-acetylenolpyruvoylglucosamine reductase.